The primary structure comprises 264 residues: Thymidylate synthase (264 aa).

Arginine 21 is a dUMP binding site. (6R)-5,10-methylene-5,6,7,8-tetrahydrofolate is bound at residue histidine 51. 126-127 (RR) contacts dUMP. The active-site Nucleophile is cysteine 146. DUMP contacts are provided by residues 166 to 169 (RSCD), asparagine 177, and 207 to 209 (HLY). Position 169 (aspartate 169) interacts with (6R)-5,10-methylene-5,6,7,8-tetrahydrofolate. Alanine 263 provides a ligand contact to (6R)-5,10-methylene-5,6,7,8-tetrahydrofolate.

Belongs to the thymidylate synthase family. Bacterial-type ThyA subfamily. Homodimer.

It is found in the cytoplasm. The enzyme catalyses dUMP + (6R)-5,10-methylene-5,6,7,8-tetrahydrofolate = 7,8-dihydrofolate + dTMP. It participates in pyrimidine metabolism; dTTP biosynthesis. In terms of biological role, catalyzes the reductive methylation of 2'-deoxyuridine-5'-monophosphate (dUMP) to 2'-deoxythymidine-5'-monophosphate (dTMP) while utilizing 5,10-methylenetetrahydrofolate (mTHF) as the methyl donor and reductant in the reaction, yielding dihydrofolate (DHF) as a by-product. This enzymatic reaction provides an intracellular de novo source of dTMP, an essential precursor for DNA biosynthesis. This Shewanella putrefaciens (strain CN-32 / ATCC BAA-453) protein is Thymidylate synthase.